The primary structure comprises 135 residues: MACGLVASNLNLKPGECLRVRGEVAADAKSFSLNLGKDDNNLCLHFNPRFNAHGDINTIVCNSKDGGAWGAEQRETAFPFQPGSVAEVCISFNQTDLTIKLPDGYEFKFPNRLNLEAINYLSAGGDFKIKCVAFE.

A2 bears the N-acetylalanine mark. The Galectin domain maps to 4–135; the sequence is GLVASNLNLK…DFKIKCVAFE (132 aa). N6-acetyllysine is present on residues K13 and K29. Position 30 is a phosphoserine (S30). Residues 45-49, H53, N62, and 69-72 contribute to the a beta-D-galactoside site; these read HFNPR and WGAE. Position 108 is an N6-acetyllysine; alternate (K108). An N6-succinyllysine; alternate modification is found at K108. N6-acetyllysine is present on K128.

In terms of assembly, homodimer. Binds LGALS3BP. Interacts with CD2, CD3, CD4, CD6, CD7, CD43, ALCAM and CD45. Interacts with laminin (via poly-N-acetyllactosamine). Interacts with SUSD2. Interacts with cargo receptor TMED10; the interaction mediates the translocation from the cytoplasm into the ERGIC (endoplasmic reticulum-Golgi intermediate compartment) and thereby secretion.

Its subcellular location is the secreted. It localises to the extracellular space. The protein resides in the extracellular matrix. It is found in the cytoplasm. Functionally, lectin that binds beta-galactoside and a wide array of complex carbohydrates. Plays a role in regulating apoptosis, cell proliferation and cell differentiation. Inhibits CD45 protein phosphatase activity and therefore the dephosphorylation of Lyn kinase. Strong inducer of T-cell apoptosis. The sequence is that of Galectin-1 (LGALS1) from Ovis aries (Sheep).